The following is a 120-amino-acid chain: UPF0231 protein YE0706 (120 aa).

Belongs to the UPF0231 family.

The polypeptide is UPF0231 protein YE0706 (Yersinia enterocolitica serotype O:8 / biotype 1B (strain NCTC 13174 / 8081)).